Reading from the N-terminus, the 549-residue chain is Hydroxylamine reductase (549 aa).

Residues cysteine 3, cysteine 6, cysteine 15, and cysteine 21 each coordinate [4Fe-4S] cluster. 8 residues coordinate hybrid [4Fe-2O-2S] cluster: histidine 248, glutamate 272, cysteine 316, cysteine 403, cysteine 431, cysteine 456, glutamate 490, and lysine 492. A Cysteine persulfide modification is found at cysteine 403.

It belongs to the HCP family. [4Fe-4S] cluster is required as a cofactor. The cofactor is hybrid [4Fe-2O-2S] cluster.

Its subcellular location is the cytoplasm. The catalysed reaction is A + NH4(+) + H2O = hydroxylamine + AH2 + H(+). Catalyzes the reduction of hydroxylamine to form NH(3) and H(2)O. The sequence is that of Hydroxylamine reductase from Rhodospirillum rubrum (strain ATCC 11170 / ATH 1.1.1 / DSM 467 / LMG 4362 / NCIMB 8255 / S1).